A 307-amino-acid chain; its full sequence is Glycine--tRNA ligase alpha subunit (307 aa).

It belongs to the class-II aminoacyl-tRNA synthetase family. As to quaternary structure, tetramer of two alpha and two beta subunits.

It is found in the cytoplasm. It catalyses the reaction tRNA(Gly) + glycine + ATP = glycyl-tRNA(Gly) + AMP + diphosphate. The polypeptide is Glycine--tRNA ligase alpha subunit (glyQ) (Xylella fastidiosa (strain 9a5c)).